A 245-amino-acid polypeptide reads, in one-letter code: Ribonuclease PH (245 aa).

Residues Arg-86 and 124 to 126 (GTR) each bind phosphate.

The protein belongs to the RNase PH family. In terms of assembly, homohexameric ring arranged as a trimer of dimers.

The enzyme catalyses tRNA(n+1) + phosphate = tRNA(n) + a ribonucleoside 5'-diphosphate. In terms of biological role, phosphorolytic 3'-5' exoribonuclease that plays an important role in tRNA 3'-end maturation. Removes nucleotide residues following the 3'-CCA terminus of tRNAs; can also add nucleotides to the ends of RNA molecules by using nucleoside diphosphates as substrates, but this may not be physiologically important. Probably plays a role in initiation of 16S rRNA degradation (leading to ribosome degradation) during starvation. The sequence is that of Ribonuclease PH from Bacillus cereus (strain B4264).